The sequence spans 215 residues: Dual specificity phosphatase 29 (215 aa).

Positions 53–201 (HVNEVWPRLH…LRELDKQLVK (149 aa)) constitute a Tyrosine-protein phosphatase domain. 145–152 (HCAMGRSR) lines the substrate pocket. The Phosphocysteine intermediate role is filled by Cys146.

It belongs to the protein-tyrosine phosphatase family. Non-receptor class dual specificity subfamily. Homodimer. Interacts with PRKAA2. In terms of tissue distribution, skeletal muscle, liver and adipose tissue.

The protein localises to the cytoplasm. The protein resides in the nucleus. The enzyme catalyses O-phospho-L-tyrosyl-[protein] + H2O = L-tyrosyl-[protein] + phosphate. It catalyses the reaction O-phospho-L-seryl-[protein] + H2O = L-seryl-[protein] + phosphate. It carries out the reaction O-phospho-L-threonyl-[protein] + H2O = L-threonyl-[protein] + phosphate. Its function is as follows. Dual specificity phosphatase able to dephosphorylate phosphotyrosine, phosphoserine and phosphothreonine residues within the same substrate, with a preference for phosphotyrosine as a substrate. Involved in the modulation of intracellular signaling cascades. In skeletal muscle regulates systemic glucose homeostasis by activating, AMPK, an energy sensor protein kinase. Affects MAP kinase signaling though modulation of the MAPK1/2 cascade in skeletal muscle promoting muscle cell differentiation, development and atrophy. This is Dual specificity phosphatase 29 from Mus musculus (Mouse).